Reading from the N-terminus, the 209-residue chain is Large ribosomal subunit protein uL3 (209 aa).

The disordered stretch occupies residues 128–163 (AHRGPMTHGSKFHRAVGSMGASSDPSRTFKNKRMPG).

Belongs to the universal ribosomal protein uL3 family. In terms of assembly, part of the 50S ribosomal subunit. Forms a cluster with proteins L14 and L19.

Its function is as follows. One of the primary rRNA binding proteins, it binds directly near the 3'-end of the 23S rRNA, where it nucleates assembly of the 50S subunit. This is Large ribosomal subunit protein uL3 from Clostridium botulinum (strain 657 / Type Ba4).